The chain runs to 119 residues: Succinate dehydrogenase assembly factor 2, mitochondrial (119 aa).

Belongs to the SDHAF2 family. In terms of assembly, interacts with the flavoprotein subunit within the SDH catalytic dimer.

It localises to the mitochondrion matrix. Its function is as follows. Plays an essential role in the assembly of succinate dehydrogenase (SDH), an enzyme complex (also referred to as respiratory complex II) that is a component of both the tricarboxylic acid (TCA) cycle and the mitochondrial electron transport chain, and which couples the oxidation of succinate to fumarate with the reduction of ubiquinone (coenzyme Q) to ubiquinol. Required for flavinylation (covalent attachment of FAD) of the flavoprotein subunit of the SDH catalytic dimer. The chain is Succinate dehydrogenase assembly factor 2, mitochondrial from Caenorhabditis elegans.